The following is a 478-amino-acid chain: Methylenetetrahydrofolate--tRNA-(uracil-5-)-methyltransferase TrmFO (478 aa).

16–21 contributes to the FAD binding site; it reads GAGLAG. The disordered stretch occupies residues 429 to 448; that stretch reads PLANPPTKGPDGKRLRGPEK. Residues 438–448 show a composition bias toward basic and acidic residues; sequence PDGKRLRGPEK.

It belongs to the MnmG family. TrmFO subfamily. Requires FAD as cofactor.

Its subcellular location is the cytoplasm. The enzyme catalyses uridine(54) in tRNA + (6R)-5,10-methylene-5,6,7,8-tetrahydrofolate + NADH + H(+) = 5-methyluridine(54) in tRNA + (6S)-5,6,7,8-tetrahydrofolate + NAD(+). It catalyses the reaction uridine(54) in tRNA + (6R)-5,10-methylene-5,6,7,8-tetrahydrofolate + NADPH + H(+) = 5-methyluridine(54) in tRNA + (6S)-5,6,7,8-tetrahydrofolate + NADP(+). In terms of biological role, catalyzes the folate-dependent formation of 5-methyl-uridine at position 54 (M-5-U54) in all tRNAs. The chain is Methylenetetrahydrofolate--tRNA-(uracil-5-)-methyltransferase TrmFO from Rhodopseudomonas palustris (strain ATCC BAA-98 / CGA009).